A 431-amino-acid polypeptide reads, in one-letter code: Adenylosuccinate synthetase (431 aa).

Residues 13-19 and 41-43 contribute to the GTP site; these read GDEGKGK and GHT. The Proton acceptor role is filled by D14. Mg(2+) contacts are provided by D14 and G41. Residues 14–17, 39–42, T130, R144, Q225, T240, and R304 contribute to the IMP site; these read DEGK and NAGH. The Proton donor role is filled by H42. 300 to 306 lines the substrate pocket; it reads ATTGRKR. GTP is bound by residues R306, 332 to 334, and 415 to 417; these read KLD and STG.

Belongs to the adenylosuccinate synthetase family. In terms of assembly, homodimer. It depends on Mg(2+) as a cofactor.

It is found in the cytoplasm. It catalyses the reaction IMP + L-aspartate + GTP = N(6)-(1,2-dicarboxyethyl)-AMP + GDP + phosphate + 2 H(+). It participates in purine metabolism; AMP biosynthesis via de novo pathway; AMP from IMP: step 1/2. In terms of biological role, plays an important role in the de novo pathway of purine nucleotide biosynthesis. Catalyzes the first committed step in the biosynthesis of AMP from IMP. This Shewanella piezotolerans (strain WP3 / JCM 13877) protein is Adenylosuccinate synthetase.